Reading from the N-terminus, the 228-residue chain is 5'-methylthioadenosine/S-adenosylhomocysteine nucleosidase (228 aa).

Glutamate 11 functions as the Proton acceptor in the catalytic mechanism. Substrate is bound by residues glycine 77, isoleucine 151, and 172-173 (ME). Aspartate 196 functions as the Proton donor in the catalytic mechanism.

Belongs to the PNP/UDP phosphorylase family. MtnN subfamily.

The catalysed reaction is S-adenosyl-L-homocysteine + H2O = S-(5-deoxy-D-ribos-5-yl)-L-homocysteine + adenine. The enzyme catalyses S-methyl-5'-thioadenosine + H2O = 5-(methylsulfanyl)-D-ribose + adenine. It carries out the reaction 5'-deoxyadenosine + H2O = 5-deoxy-D-ribose + adenine. It participates in amino-acid biosynthesis; L-methionine biosynthesis via salvage pathway; S-methyl-5-thio-alpha-D-ribose 1-phosphate from S-methyl-5'-thioadenosine (hydrolase route): step 1/2. Catalyzes the irreversible cleavage of the glycosidic bond in both 5'-methylthioadenosine (MTA) and S-adenosylhomocysteine (SAH/AdoHcy) to adenine and the corresponding thioribose, 5'-methylthioribose and S-ribosylhomocysteine, respectively. Also cleaves 5'-deoxyadenosine, a toxic by-product of radical S-adenosylmethionine (SAM) enzymes, into 5-deoxyribose and adenine. This is 5'-methylthioadenosine/S-adenosylhomocysteine nucleosidase from Staphylococcus saprophyticus subsp. saprophyticus (strain ATCC 15305 / DSM 20229 / NCIMB 8711 / NCTC 7292 / S-41).